The primary structure comprises 234 residues: Triggering receptor expressed on myeloid cells 1 (234 aa).

The first 20 residues, 1-20 (MRKTRLWGLLWMLFVSELRA), serve as a signal peptide directing secretion. At 21–205 (ATKLTEEKYE…TDIIRVPVFN (185 aa)) the chain is on the extracellular side. The region spanning 26-134 (EEKYELKEGQ…LFDRIRLVVT (109 aa)) is the Ig-like V-type domain. Cysteines 41 and 113 form a disulfide. N-linked (GlcNAc...) asparagine glycans are attached at residues N146, N191, and N194. The chain crosses the membrane as a helical span at residues 206 to 226 (IVILLAGGFLSKSLVFSVLFA). Topologically, residues 227–234 (VTLRSFVP) are cytoplasmic.

In terms of assembly, monomer. Homomultimer; when activated. Interacts with TYROBP/DAP12. Interacts with TLR4. In terms of processing, glycosylated. In terms of tissue distribution, mostly expressed by immune cells of the myeloid lineage, such as monocytes, macrophages, neutrophils and dendritic cells. Expression is associated with a mature stage of myeloid development. Highly expressed in adult liver, lung and spleen than in corresponding fetal tissue. Also expressed in the lymph node, placenta, spinal cord and heart tissues. Isoform 2 was detected in the lung, liver and mature monocytes.

The protein localises to the cell membrane. The protein resides in the secreted. Its function is as follows. Cell surface receptor that plays important roles in innate and adaptive immunity by amplifying inflammatory responses. Upon activation by various ligands such as PGLYRP1, HMGB1 or HSP70, multimerizes and forms a complex with transmembrane adapter TYROBP/DAP12. In turn, initiates a SYK-mediated cascade of tyrosine phosphorylation, activating multiple downstream mediators such as BTK, MAPK1, MAPK3 or phospholipase C-gamma. This cascade promotes the neutrophil- and macrophage-mediated release of pro-inflammatory cytokines and/or chemokines, as well as their migration and thereby amplifies inflammatory responses that are triggered by bacterial and fungal infections. By also promoting the amplification of inflammatory signals that are initially triggered by Toll-like receptor (TLR) and NOD-like receptor engagement, plays a major role in the pathophysiology of acute and chronic inflammatory diseases of different etiologies including septic shock and atherosclerosis. In terms of biological role, acts as a decoy receptor, counterbalancing TREM1 pro-inflammatory activity through the neutralization of its ligand. The polypeptide is Triggering receptor expressed on myeloid cells 1 (TREM1) (Homo sapiens (Human)).